Consider the following 159-residue polypeptide: Deoxyuridine 5'-triphosphate nucleotidohydrolase (159 aa).

Residues S79, G92, D95, Y98, K103, R148, F153, and G154 each coordinate dUMP.

It belongs to the dUTPase family. Homotrimer. Mg(2+) serves as cofactor.

It carries out the reaction dUTP + H2O = dUMP + diphosphate + H(+). The protein operates within pyrimidine metabolism; dUMP biosynthesis; dUMP from dCTP (dUTP route): step 2/2. Involved in nucleotide metabolism via production of dUMP, the immediate precursor of thymidine nucleotides, and decreases the intracellular concentration of dUTP so that uracil cannot be incorporated into DNA. The protein is Deoxyuridine 5'-triphosphate nucleotidohydrolase (DUT1) of Candida albicans (strain SC5314 / ATCC MYA-2876) (Yeast).